Consider the following 1074-residue polypeptide: MENWTGRPWLYLLLLLSLPQLCLDQEVLSGHSLQTPTEEGQGPEGVWGPWVQWASCSQPCGVGVQRRSRTCQLPTVQLHPSLPLPPRPPRHPEALLPRGQGPRPQTSPETLPLYRTQSRGRGGPLRGPASHLGREETQEIRAARRSRLRDPIKPGMFGYGRVPFALPLHRNRRHPRSPPRSELSLISSRGEEAIPSPTPRAEPFSANGSPQTELPPTELSVHTPSPQAEPLSPETAQTEVAPRTRPAPLRHHPRAQASGTEPPSPTHSLGEGGFFRASPQPRRPSSQGWASPQVAGRRPDPFPSVPRGRGQQGQGPWGTGGTPHGPRLEPDPQHPGAWLPLLSNGPHASSLWSLFAPSSPIPRCSGESEQLRACSQAPCPPEQPDPRALQCAAFNSQEFMGQLYQWEPFTEVQGSQRCELNCRPRGFRFYVRHTEKVQDGTLCQPGAPDICVAGRCLSPGCDGILGSGRRPDGCGVCGGDDSTCRLVSGNLTDRGGPLGYQKILWIPAGALRLQIAQLRPSSNYLALRGPGGRSIINGNWAVDPPGSYRAGGTVFRYNRPPREEGKGESLSAEGPTTQPVDVYMIFQEENPGVFYQYVISSPPPILENPTPEPPVPQLQPEILRVEPPLAPAPRPARTPGTLQRQVRIPQMPAPPHPRTPLGSPAAYWKRVGHSACSASCGKGVWRPIFLCISRESGEELDERSCAAGARPPASPEPCHGTPCPPYWEAGEWTSCSRSCGPGTQHRQLQCRQEFGGGGSSVPPERCGHLPRPNITQSCQLRLCGHWEVGSPWSQCSVRCGRGQRSRQVRCVGNNGDEVSEQECASGPPQPPSREACDMGPCTTAWFHSDWSSKCSAECGTGIQRRSVVCLGSGAALGPGQGEAGAGTGQSCPTGSRPPDMRACSLGPCERTWRWYTGPWGECSSECGSGTQRRDIICVSKLGTEFNVTSPSNCSHLPRPPALQPCQGQACQDRWFSTPWSPCSRSCQGGTQTREVQCLSTNQTLSTRCPPQLRPSRKRPCNSQPCSQRPDDQCKDSSPHCPLVVQARLCVYPYYTATCCRSCAHVLERSPQDPS.

Residues 1 to 24 form the signal peptide; sequence MENWTGRPWLYLLLLLSLPQLCLD. A TSP type-1 1 domain is found at 48–93; it reads GPWVQWASCSQPCGVGVQRRSRTCQLPTVQLHPSLPLPPRPPRHPE. The disordered stretch occupies residues 77 to 342; that stretch reads QLHPSLPLPP…QHPGAWLPLL (266 aa). The span at 103-119 shows a compositional bias: polar residues; that stretch reads RPQTSPETLPLYRTQSR. Positions 132 to 152 are enriched in basic and acidic residues; sequence LGREETQEIRAARRSRLRDPI. The segment covering 206-226 has biased composition (polar residues); sequence ANGSPQTELPPTELSVHTPSP. Positions 310-323 are enriched in gly residues; sequence GQQGQGPWGTGGTP. Asn-490 carries an N-linked (GlcNAc...) (complex) asparagine glycan. 5 consecutive TSP type-1 domains span residues 723-782, 783-842, 845-909, 910-969, and 970-1026; these read CPPY…QLRL, CGHW…GPCT, WFHS…GPCE, RTWR…QGQA, and CQDR…QPCS. Asn-773 carries an N-linked (GlcNAc...) asparagine glycan. Residues 1029 to 1066 form the PLAC domain; sequence PDDQCKDSSPHCPLVVQARLCVYPYYTATCCRSCAHVL.

In terms of assembly, interacts with CTSB. Interacts with FBN1. In terms of processing, N-glycosylated. Can be O-fucosylated by POFUT2 on a serine or a threonine residue found within the consensus sequence C1-X(2)-(S/T)-C2-G of the TSP type-1 repeat domains where C1 and C2 are the first and second cysteine residue of the repeat, respectively. Fucosylated repeats can then be further glycosylated by the addition of a beta-1,3-glucose residue by the glucosyltransferase, B3GALTL. Fucosylation mediates the efficient secretion of ADAMTS family members. Can also be C-glycosylated with one or two mannose molecules on tryptophan residues within the consensus sequence W-X-X-W of the TPRs. N- and C-glycosylations can also facilitate secretion. Expressed in colon, heart, leukocyte, liver, lung, skeletal muscle, spleen, testis and placenta. Weaker expression in bone marrow, brain tissue, kidney and pancreas. Expression studies in fetal tissues reveal strong expression in heart, kidney, liver, lung and skeletal muscle, but weaker expression in fetal brain and skin.

The protein localises to the secreted. Its subcellular location is the extracellular space. It localises to the extracellular matrix. Its function is as follows. Positive regulation of apoptosis. May facilitate FBN1 microfibril biogenesis. The protein is ADAMTS-like protein 4 (ADAMTSL4) of Homo sapiens (Human).